We begin with the raw amino-acid sequence, 1674 residues long: E3 ubiquitin-protein ligase SHPRH (1674 aa).

The segment at 1–26 (MSSRRKRAPPMKVDEERQQQLHWNMH) is disordered. The segment covering 12–26 (KVDEERQQQLHWNMH) has biased composition (basic and acidic residues). Phosphoserine is present on residues serine 259 and serine 261. The Helicase ATP-binding; first part domain occupies 302–384 (YQREAVNWML…TVEVLALILT (83 aa)). 368 to 375 (DEMGLGKT) serves as a coordination point for ATP. The H15 domain maps to 433-507 (HCPPTRVMIL…GFSGTFTLGK (75 aa)). A disordered region spans residues 524–548 (SPRKIEKELRKSVNKDADSEYLPSN). The span at 526-541 (RKIEKELRKSVNKDAD) shows a compositional bias: basic and acidic residues. Serine 626 carries the phosphoserine modification. A PHD-type zinc finger spans residues 649-700 (RFECICGEFDQIGHKPRVQCLKCHLWQHAKCVNYEEKNLKVKPFYCPHCLVA). In terms of domain architecture, Helicase ATP-binding; second part spans 701-859 (MEPVSTRATL…FGLVVFLGIE (159 aa)). A DEAQ box motif is present at residues 810–813 (DEAQ). The RING-type zinc finger occupies 1423-1470 (CPICARQLGKQWAVLTCGHCFCNECTSIIIEQYSVGSHRSSIKCAICR). The Helicase C-terminal domain occupies 1505-1663 (AVVRTLMKIQ…ASVLTVAGLA (159 aa)).

Belongs to the SNF2/RAD54 helicase family. As to quaternary structure, homodimer. Interacts with HLTF, PCNA, UBE2N and RAD18. Broadly expressed (at protein level).

The catalysed reaction is S-ubiquitinyl-[E2 ubiquitin-conjugating enzyme]-L-cysteine + [acceptor protein]-L-lysine = [E2 ubiquitin-conjugating enzyme]-L-cysteine + N(6)-ubiquitinyl-[acceptor protein]-L-lysine.. It functions in the pathway protein modification; protein ubiquitination. Functionally, E3 ubiquitin-protein ligase involved in DNA repair. Upon genotoxic stress, accepts ubiquitin from the UBE2N-UBE2V2 E2 complex and transfers it to 'Lys-164' of PCNA which had been monoubiquitinated by UBE2A/B-RAD18, promoting the formation of non-canonical poly-ubiquitin chains linked through 'Lys-63'. In Mus musculus (Mouse), this protein is E3 ubiquitin-protein ligase SHPRH (Shprh).